We begin with the raw amino-acid sequence, 796 residues long: Striatin-3 (796 aa).

Met1 is modified (N-acetylmethionine). A compositionally biased stretch (gly residues) spans 1–13; the sequence is MDELAGGGGGGQG. A disordered region spans residues 1-60; that stretch reads MDELAGGGGGGQGMAAPPRPQQGPGGNLSLPPGANGAPGGGGPPAAEAAGPPAGPELSRP. A caveolin-binding region spans residues 71-79; sequence YIQHEWARF. A coiled-coil region spans residues 77 to 136; it reads ARFEMERAHWEVERAELQARIAFLQGERKGQENLKKDLVRRIKMLEYALKQERAKYHKLK. Thr150 bears the Phosphothreonine mark. A calmodulin-binding region spans residues 166-183; that stretch reads QNSQLTWKQGRQLLRQYL. Phosphoserine occurs at positions 202, 214, 229, 257, and 334. 2 disordered regions span residues 252–271 and 311–335; these read ENAD…IPEG and EDGE…DLSP. Residues 253 to 264 show a composition bias toward acidic residues; it reads NADDSDEEENDM. 6 WD repeats span residues 477–516, 530–569, 583–622, 678–717, 720–759, and 766–795; these read SHFD…PAKK, AHIG…VDPY, AHTD…PCVC, QSSN…MIHS, AHLD…CVQE, and KLDE…AKVF.

It belongs to the WD repeat striatin family. Tetramerizes. Part of the core of STRIPAK complexes composed of PP2A catalytic and scaffolding subunits, the striatins (PP2A regulatory subunits), the striatin-associated proteins MOB4, STRIP1 and STRIP2, PDCD10 and members of the STE20 kinases, such as STK24 and STK26. The STRIPAK complex can be extended by adapter proteins such as SLMAP:SIKE1 or CTTNBP2NL. Interacts with CDC42BPB. Mainly expressed in the brain and muscles but is also detected at low levels in various tissues such as kidney, spleen and lung.

Its subcellular location is the cytoplasm. It is found in the membrane. Its function is as follows. Calmodulin-binding scaffolding protein which is the center of the striatin-interacting phosphatase and kinase (STRIPAK) complexes. STRIPAK complexes have critical roles in protein (de)phosphorylation and are regulators of multiple signaling pathways including Hippo, MAPK, nuclear receptor and cytoskeleton remodeling. Different types of STRIPAK complexes are involved in a variety of biological processes such as cell growth, differentiation, apoptosis, metabolism and immune regulation. The polypeptide is Striatin-3 (Strn3) (Mus musculus (Mouse)).